The sequence spans 291 residues: MTALNWKPFIYGGLASITAECGTFPIDLTKTRLQVQGQPNDAKYKEIRYRGMMHAIVRIWREEGVKALYSGIAPAMLRQASYGTIKIGTYQSLKRLFVDCPEDETLVLNAFCGVLSGVVSSCIANPTDVLKIRMQAQGNVMQGGMIVNFINIYQQEGTRGLWKGVSLTAQRAAIVVGVELPVYDITKKHLILSGLMGDTVYTHFLSSFTCGLAGALASNPVDVVRTRMMNQRSIRDASNSSYKGTLDCLLQTWKNEGFFALYKGFWPNWLRLGPWNIIFFITYEQLKKLNL.

Solcar repeat units follow at residues 7–96, 104–189, and 198–289; these read KPFI…LKRL, ETLV…TKKH, and DTVY…LKKL. Helical transmembrane passes span 9–26, 71–89, 106–124, 164–183, 204–224, and 264–283; these read FIYG…TFPI, GIAP…KIGT, LVLN…SCIA, GVSL…LPVY, FLSS…VDVV, and GFWP…FITY.

Belongs to the mitochondrial carrier (TC 2.A.29) family.

It is found in the mitochondrion inner membrane. It carries out the reaction sulfite(in) + sulfate(out) = sulfite(out) + sulfate(in). The enzyme catalyses thiosulfate(in) + sulfate(out) = thiosulfate(out) + sulfate(in). It catalyses the reaction sulfate(out) + phosphate(in) = sulfate(in) + phosphate(out). The catalysed reaction is oxalate(in) + sulfate(out) = oxalate(out) + sulfate(in). It carries out the reaction malonate(in) + sulfate(out) = malonate(out) + sulfate(in). The enzyme catalyses maleate(in) + sulfate(out) = maleate(out) + sulfate(in). It catalyses the reaction (S)-malate(in) + sulfate(out) = (S)-malate(out) + sulfate(in). The catalysed reaction is (3S)-citramalate(in) + sulfate(out) = (3S)-citramalate(out) + sulfate(in). It carries out the reaction (3R)-citramalate(in) + sulfate(out) = (3R)-citramalate(out) + sulfate(in). The enzyme catalyses sulfate(out) + succinate(in) = sulfate(in) + succinate(out). It catalyses the reaction (S,S)-tartrate(in) + sulfate(out) = (S,S)-tartrate(out) + sulfate(in). The catalysed reaction is (2R,3R)-tartrate(in) + sulfate(out) = (2R,3R)-tartrate(out) + sulfate(in). It carries out the reaction D-aspartate(in) + sulfate(out) = D-aspartate(out) + sulfate(in). The enzyme catalyses L-aspartate(in) + sulfate(out) = L-aspartate(out) + sulfate(in). It catalyses the reaction sulfate(in) = sulfate(out). The catalysed reaction is phosphate(in) = phosphate(out). It carries out the reaction (S)-malate(out) = (S)-malate(in). Its function is as follows. Probable transporter. In terms of biological role, antiporter that transports inorganic anions (sulfate, sulfite, thiosulfate and phosphate) and, to a lesser extent, a variety of dicarboxylates (e.g. malonate, malate and citramalate) and, even more so, aspartate. The sulfate/sulfate exchange is much higher than the phosphate/phosphate and malate/malate exchanges. The transport affinities is higher for sulfate and thiosulfate than for any other substrate. May catalyze the export of sulfite and thiosulfate (the hydrogen sulfide degradation products) from the mitochondria, thereby modulating the level of the hydrogen sulfide. Also may mediate a very low unidirectional transport of sulfate, phosphate and (S)-malate. The polypeptide is Kidney mitochondrial carrier protein 1 (Xenopus laevis (African clawed frog)).